The following is a 225-amino-acid chain: PKHD-type hydroxylase YbiX (225 aa).

A Fe2OG dioxygenase domain is found at 78–177 (TLSTPLFNRY…RVASFMWIQS (100 aa)). Fe cation contacts are provided by His96, Asp98, and His158. Arg168 provides a ligand contact to 2-oxoglutarate.

Requires Fe(2+) as cofactor. It depends on L-ascorbate as a cofactor.

This chain is PKHD-type hydroxylase YbiX, found in Escherichia coli O17:K52:H18 (strain UMN026 / ExPEC).